Reading from the N-terminus, the 622-residue chain is DNA polymerase II small subunit (622 aa).

A disordered region spans residues 76 to 113; sequence ISTGEGSQKVPDHEELEKITNESSVESSISTGETPKTE. Basic and acidic residues predominate over residues 85–95; it reads VPDHEELEKIT. Polar residues predominate over residues 96–109; that stretch reads NESSVESSISTGET.

Belongs to the DNA polymerase delta/II small subunit family. Heterodimer of a large subunit and a small subunit.

It carries out the reaction DNA(n) + a 2'-deoxyribonucleoside 5'-triphosphate = DNA(n+1) + diphosphate. The enzyme catalyses Exonucleolytic cleavage in the 3'- to 5'-direction to yield nucleoside 5'-phosphates.. Possesses two activities: a DNA synthesis (polymerase) and an exonucleolytic activity that degrades single-stranded DNA in the 3' to 5' direction. Has a template-primer preference which is characteristic of a replicative DNA polymerase. The chain is DNA polymerase II small subunit (polB) from Pyrococcus horikoshii (strain ATCC 700860 / DSM 12428 / JCM 9974 / NBRC 100139 / OT-3).